The sequence spans 364 residues: Chorismate synthase (364 aa).

Arg-48 contributes to the NADP(+) binding site. FMN-binding positions include 131 to 133 (RSS), 243 to 244 (NA), Gly-288, 303 to 307 (KPTSS), and Arg-329.

This sequence belongs to the chorismate synthase family. As to quaternary structure, homotetramer. FMNH2 serves as cofactor.

It catalyses the reaction 5-O-(1-carboxyvinyl)-3-phosphoshikimate = chorismate + phosphate. Its pathway is metabolic intermediate biosynthesis; chorismate biosynthesis; chorismate from D-erythrose 4-phosphate and phosphoenolpyruvate: step 7/7. Functionally, catalyzes the anti-1,4-elimination of the C-3 phosphate and the C-6 proR hydrogen from 5-enolpyruvylshikimate-3-phosphate (EPSP) to yield chorismate, which is the branch point compound that serves as the starting substrate for the three terminal pathways of aromatic amino acid biosynthesis. This reaction introduces a second double bond into the aromatic ring system. This chain is Chorismate synthase, found in Brucella melitensis biotype 2 (strain ATCC 23457).